We begin with the raw amino-acid sequence, 573 residues long: Proline--tRNA ligase (573 aa).

It belongs to the class-II aminoacyl-tRNA synthetase family. ProS type 1 subfamily. As to quaternary structure, homodimer.

It is found in the cytoplasm. It carries out the reaction tRNA(Pro) + L-proline + ATP = L-prolyl-tRNA(Pro) + AMP + diphosphate. Its function is as follows. Catalyzes the attachment of proline to tRNA(Pro) in a two-step reaction: proline is first activated by ATP to form Pro-AMP and then transferred to the acceptor end of tRNA(Pro). As ProRS can inadvertently accommodate and process non-cognate amino acids such as alanine and cysteine, to avoid such errors it has two additional distinct editing activities against alanine. One activity is designated as 'pretransfer' editing and involves the tRNA(Pro)-independent hydrolysis of activated Ala-AMP. The other activity is designated 'posttransfer' editing and involves deacylation of mischarged Ala-tRNA(Pro). The misacylated Cys-tRNA(Pro) is not edited by ProRS. The chain is Proline--tRNA ligase from Chromohalobacter salexigens (strain ATCC BAA-138 / DSM 3043 / CIP 106854 / NCIMB 13768 / 1H11).